The chain runs to 619 residues: UvrABC system protein C (619 aa).

Positions 20-98 constitute a GIY-YIG domain; the sequence is TAPGVYRMYA…IKSLSPRYNV (79 aa). The region spanning 207–242 is the UVR domain; the sequence is DQLGEEIMHSMQQASEALEFERAARLRDLLSSLRSM.

Belongs to the UvrC family. Interacts with UvrB in an incision complex.

It localises to the cytoplasm. Its function is as follows. The UvrABC repair system catalyzes the recognition and processing of DNA lesions. UvrC both incises the 5' and 3' sides of the lesion. The N-terminal half is responsible for the 3' incision and the C-terminal half is responsible for the 5' incision. This is UvrABC system protein C from Xanthomonas euvesicatoria pv. vesicatoria (strain 85-10) (Xanthomonas campestris pv. vesicatoria).